Consider the following 99-residue polypeptide: Biogenesis of lysosome-related organelles complex 1 subunit SNN1 (99 aa).

Positions 34 to 94 form a coiled coil; it reads SINELRESQA…VVLKRYEKMV (61 aa).

It belongs to the SNAPIN family. Component of the biogenesis of lysosome-related organelles complex-1 (BLOC-1).

It is found in the endosome. Functionally, component of the biogenesis of lysosome-related organelles complex-1 (BLOC-1), a complex involved in endosomal cargo sorting. This Kluyveromyces lactis (strain ATCC 8585 / CBS 2359 / DSM 70799 / NBRC 1267 / NRRL Y-1140 / WM37) (Yeast) protein is Biogenesis of lysosome-related organelles complex 1 subunit SNN1 (SNN1).